A 121-amino-acid chain; its full sequence is Acidic phospholipase A2 PLA-2 (121 aa).

7 cysteine pairs are disulfide-bonded: C26-C115, C28-C44, C43-C95, C49-C121, C50-C88, C57-C81, and C75-C86. 3 residues coordinate Ca(2+): Y27, G29, and G31. Residue H47 is part of the active site. D48 contacts Ca(2+). D89 is an active-site residue.

Belongs to the phospholipase A2 family. Group II subfamily. D49 sub-subfamily. It depends on Ca(2+) as a cofactor. In terms of tissue distribution, expressed by the venom gland.

The protein localises to the secreted. The catalysed reaction is a 1,2-diacyl-sn-glycero-3-phosphocholine + H2O = a 1-acyl-sn-glycero-3-phosphocholine + a fatty acid + H(+). PLA2 catalyzes the calcium-dependent hydrolysis of the 2-acyl groups in 3-sn-phosphoglycerides. The sequence is that of Acidic phospholipase A2 PLA-2 from Eristicophis macmahoni (Leaf-nosed viper).